Here is a 156-residue protein sequence, read N- to C-terminus: 13 kDa prolamin C (156 aa).

A signal peptide spans methionine 1 to alanine 19. The segment at glutamine 77–leucine 84 is octapeptide unique to cereal prolamins.

Belongs to the prolamin family.

The protein localises to the vacuole. Its subcellular location is the aleurone grain. Its function is as follows. Seed storage protein; serves as a source of nitrogen, carbon and sulfur for the young developing seedling. This is 13 kDa prolamin C (PROLM25) from Oryza sativa subsp. japonica (Rice).